Consider the following 146-residue polypeptide: MYPAHLLVLLAVCVSLLGAASIPPQPLNLVQFSYLIQCANHGSRATWHYTDYGCYCGKGGSGTPVDELDRCCKIHDDCYGEAEKKGCYPKMSAYDYYCGENGPYCRNIKKECQRFVCDCDVEAAKCFARAPYNDANWNIDTKKRCQ.

Residues methionine 1–alanine 19 form the signal peptide. A propeptide spanning residues alanine 20–leucine 27 is cleaved from the precursor. 7 cysteine pairs are disulfide-bonded: cysteine 38–cysteine 98, cysteine 54–cysteine 145, cysteine 56–cysteine 72, cysteine 71–cysteine 126, cysteine 78–cysteine 119, cysteine 87–cysteine 112, and cysteine 105–cysteine 117. 3 residues coordinate Ca(2+): tyrosine 55, glycine 57, and glycine 59. Histidine 75 is a catalytic residue. Aspartate 76 is a Ca(2+) binding site. Residue aspartate 120 is part of the active site.

It belongs to the phospholipase A2 family. Group I subfamily. D49 sub-subfamily. It depends on Ca(2+) as a cofactor. As to expression, expressed by the venom gland.

The protein resides in the secreted. It carries out the reaction a 1,2-diacyl-sn-glycero-3-phosphocholine + H2O = a 1-acyl-sn-glycero-3-phosphocholine + a fatty acid + H(+). Functionally, snake venom phospholipase A2 (PLA2) that inhibits collagen-induced platelet aggregation. PLA2 catalyzes the calcium-dependent hydrolysis of the 2-acyl groups in 3-sn-phosphoglycerides. This chain is Acidic phospholipase A2 S5-32M, found in Austrelaps superbus (Lowland copperhead snake).